Here is a 280-residue protein sequence, read N- to C-terminus: uncharacterized protein (280 aa).

4 stretches are compositionally biased toward basic and acidic residues: residues Glu110–Gln122, Ala167–Arg177, Ala223–Gln261, and Asp269–Glu280. Disordered stretches follow at residues Glu110–His137, His151–Arg177, and Thr219–Glu280.

This is an uncharacterized protein from Agrobacterium vitis (Rhizobium vitis).